Reading from the N-terminus, the 367-residue chain is Homoserine O-acetyltransferase (367 aa).

The AB hydrolase-1 domain occupies 44–350; sequence NVIMVEHAWT…AYGHDAFLLE (307 aa). Ser-150 serves as the catalytic Nucleophile. Arg-217 lines the substrate pocket. Residues Asp-311 and His-344 contribute to the active site. Asp-345 lines the substrate pocket.

Belongs to the AB hydrolase superfamily. MetX family. In terms of assembly, homodimer.

The protein resides in the cytoplasm. The enzyme catalyses L-homoserine + acetyl-CoA = O-acetyl-L-homoserine + CoA. The protein operates within amino-acid biosynthesis; L-methionine biosynthesis via de novo pathway; O-acetyl-L-homoserine from L-homoserine: step 1/1. Its function is as follows. Transfers an acetyl group from acetyl-CoA to L-homoserine, forming acetyl-L-homoserine. In vitro, can also use propionyl-CoA or butiryl-CoA as acyl donor. The protein is Homoserine O-acetyltransferase of Trichlorobacter lovleyi (strain ATCC BAA-1151 / DSM 17278 / SZ) (Geobacter lovleyi).